Consider the following 427-residue polypeptide: 3-phosphoshikimate 1-carboxyvinyltransferase (427 aa).

Residues lysine 22, serine 23, and arginine 27 each coordinate 3-phosphoshikimate. Lysine 22 contributes to the phosphoenolpyruvate binding site. Residues glycine 96 and arginine 124 each contribute to the phosphoenolpyruvate site. Residues serine 170, serine 171, glutamine 172, serine 198, aspartate 314, asparagine 337, and lysine 341 each coordinate 3-phosphoshikimate. Residue glutamine 172 participates in phosphoenolpyruvate binding. Residue aspartate 314 is the Proton acceptor of the active site. Phosphoenolpyruvate-binding residues include arginine 345, arginine 387, and lysine 412.

The protein belongs to the EPSP synthase family. In terms of assembly, monomer.

It is found in the cytoplasm. The catalysed reaction is 3-phosphoshikimate + phosphoenolpyruvate = 5-O-(1-carboxyvinyl)-3-phosphoshikimate + phosphate. The protein operates within metabolic intermediate biosynthesis; chorismate biosynthesis; chorismate from D-erythrose 4-phosphate and phosphoenolpyruvate: step 6/7. Catalyzes the transfer of the enolpyruvyl moiety of phosphoenolpyruvate (PEP) to the 5-hydroxyl of shikimate-3-phosphate (S3P) to produce enolpyruvyl shikimate-3-phosphate and inorganic phosphate. The protein is 3-phosphoshikimate 1-carboxyvinyltransferase of Sulfurovum sp. (strain NBC37-1).